Here is a 404-residue protein sequence, read N- to C-terminus: Cysteine desulfurase IscS (404 aa).

Pyridoxal 5'-phosphate contacts are provided by residues 75 to 76 (AT), N155, Q183, and 203 to 205 (SGH). The residue at position 206 (K206) is an N6-(pyridoxal phosphate)lysine. T243 lines the pyridoxal 5'-phosphate pocket. Residue C328 is the Cysteine persulfide intermediate of the active site. C328 lines the [2Fe-2S] cluster pocket.

This sequence belongs to the class-V pyridoxal-phosphate-dependent aminotransferase family. NifS/IscS subfamily. In terms of assembly, homodimer. Forms a heterotetramer with IscU, interacts with other sulfur acceptors. The cofactor is pyridoxal 5'-phosphate.

The protein resides in the cytoplasm. The enzyme catalyses (sulfur carrier)-H + L-cysteine = (sulfur carrier)-SH + L-alanine. It participates in cofactor biosynthesis; iron-sulfur cluster biosynthesis. Functionally, master enzyme that delivers sulfur to a number of partners involved in Fe-S cluster assembly, tRNA modification or cofactor biosynthesis. Catalyzes the removal of elemental sulfur atoms from cysteine to produce alanine. Functions as a sulfur delivery protein for Fe-S cluster synthesis onto IscU, an Fe-S scaffold assembly protein, as well as other S acceptor proteins. The sequence is that of Cysteine desulfurase IscS from Shewanella baltica (strain OS185).